Reading from the N-terminus, the 166-residue chain is Large ribosomal subunit protein uL10 (166 aa).

The protein belongs to the universal ribosomal protein uL10 family. In terms of assembly, part of the ribosomal stalk of the 50S ribosomal subunit. The N-terminus interacts with L11 and the large rRNA to form the base of the stalk. The C-terminus forms an elongated spine to which L12 dimers bind in a sequential fashion forming a multimeric L10(L12)X complex.

Its function is as follows. Forms part of the ribosomal stalk, playing a central role in the interaction of the ribosome with GTP-bound translation factors. The sequence is that of Large ribosomal subunit protein uL10 from Listeria monocytogenes serotype 4b (strain CLIP80459).